Consider the following 147-residue polypeptide: Large ribosomal subunit protein uL15 (147 aa).

Basic and acidic residues predominate over residues 1 to 13; the sequence is MRLHDLKPAEGAR. The disordered stretch occupies residues 1–58; it reads MRLHDLKPAEGARRERKRVGRGIGSGHGKTSGRGQKGQKARSGGGVRPGFEGGQMPLT. Composition is skewed to gly residues over residues 21 to 35 and 42 to 52; these read RGIG…GRGQ and SGGGVRPGFEG.

It belongs to the universal ribosomal protein uL15 family. Part of the 50S ribosomal subunit.

Its function is as follows. Binds to the 23S rRNA. The sequence is that of Large ribosomal subunit protein uL15 from Thermoanaerobacter sp. (strain X514).